Here is a 34-residue protein sequence, read N- to C-terminus: Photosystem II reaction center protein Psb30 (34 aa).

A helical transmembrane segment spans residues valine 6 to leucine 26.

Belongs to the Psb30/Ycf12 family. PSII is composed of 1 copy each of membrane proteins PsbA, PsbB, PsbC, PsbD, PsbE, PsbF, PsbH, PsbI, PsbJ, PsbK, PsbL, PsbM, PsbT, PsbX, PsbY, PsbZ, Psb30/Ycf12, peripheral proteins of the oxygen-evolving complex and a large number of cofactors. It forms dimeric complexes.

It is found in the plastid. The protein localises to the chloroplast thylakoid membrane. In terms of biological role, a core subunit of photosystem II (PSII), probably helps stabilize the reaction center. The sequence is that of Photosystem II reaction center protein Psb30 from Stigeoclonium helveticum (Green alga).